The sequence spans 1057 residues: Carbamoyl phosphate synthase large chain (1057 aa).

The tract at residues 1–401 (MPKRNDIKTI…SLLKAIRSLE (401 aa)) is carboxyphosphate synthetic domain. R129, R169, G175, G176, K208, I210, E215, G241, I242, H243, Q284, and E298 together coordinate ATP. The ATP-grasp 1 domain occupies 133–327 (RTLMNDLNVP…IAKLAAKIAV (195 aa)). Mg(2+) is bound by residues Q284, E298, and N300. The Mn(2+) site is built by Q284, E298, and N300. Residues 402–546 (YGVHHLGLPN…YGTYETENES (145 aa)) form an oligomerization domain region. The tract at residues 547-929 (IVTDKEKILV…ALFKGLTGSG (383 aa)) is carbamoyl phosphate synthetic domain. Positions 671–861 (EALLRKINVP…MAQLAMRAII (191 aa)) constitute an ATP-grasp 2 domain. Residues R707, R746, L748, E752, G777, V778, H779, S780, Q820, and E832 each contribute to the ATP site. The Mg(2+) site is built by Q820, E832, and N834. Residues Q820, E832, and N834 each contribute to the Mn(2+) site. In terms of domain architecture, MGS-like spans 930–1057 (VEVKDHGTVL…ESMTFTMRQM (128 aa)). The interval 930 to 1057 (VEVKDHGTVL…ESMTFTMRQM (128 aa)) is allosteric domain.

The protein belongs to the CarB family. Composed of two chains; the small (or glutamine) chain promotes the hydrolysis of glutamine to ammonia, which is used by the large (or ammonia) chain to synthesize carbamoyl phosphate. Tetramer of heterodimers (alpha,beta)4. Mg(2+) serves as cofactor. The cofactor is Mn(2+).

It carries out the reaction hydrogencarbonate + L-glutamine + 2 ATP + H2O = carbamoyl phosphate + L-glutamate + 2 ADP + phosphate + 2 H(+). The catalysed reaction is hydrogencarbonate + NH4(+) + 2 ATP = carbamoyl phosphate + 2 ADP + phosphate + 2 H(+). The protein operates within amino-acid biosynthesis; L-arginine biosynthesis; carbamoyl phosphate from bicarbonate: step 1/1. It participates in pyrimidine metabolism; UMP biosynthesis via de novo pathway; (S)-dihydroorotate from bicarbonate: step 1/3. Functionally, large subunit of the glutamine-dependent carbamoyl phosphate synthetase (CPSase). CPSase catalyzes the formation of carbamoyl phosphate from the ammonia moiety of glutamine, carbonate, and phosphate donated by ATP, constituting the first step of 2 biosynthetic pathways, one leading to arginine and/or urea and the other to pyrimidine nucleotides. The large subunit (synthetase) binds the substrates ammonia (free or transferred from glutamine from the small subunit), hydrogencarbonate and ATP and carries out an ATP-coupled ligase reaction, activating hydrogencarbonate by forming carboxy phosphate which reacts with ammonia to form carbamoyl phosphate. The sequence is that of Carbamoyl phosphate synthase large chain from Staphylococcus aureus (strain USA300 / TCH1516).